The following is a 333-amino-acid chain: Biotin synthase (333 aa).

One can recognise a Radical SAM core domain in the interval Ala47–Arg276. [4Fe-4S] cluster contacts are provided by Cys62, Cys66, and Cys69. Residues Cys107, Cys139, Cys199, and Arg271 each contribute to the [2Fe-2S] cluster site.

Belongs to the radical SAM superfamily. Biotin synthase family. As to quaternary structure, homodimer. It depends on [4Fe-4S] cluster as a cofactor. [2Fe-2S] cluster serves as cofactor.

The catalysed reaction is (4R,5S)-dethiobiotin + (sulfur carrier)-SH + 2 reduced [2Fe-2S]-[ferredoxin] + 2 S-adenosyl-L-methionine = (sulfur carrier)-H + biotin + 2 5'-deoxyadenosine + 2 L-methionine + 2 oxidized [2Fe-2S]-[ferredoxin]. Its pathway is cofactor biosynthesis; biotin biosynthesis; biotin from 7,8-diaminononanoate: step 2/2. Functionally, catalyzes the conversion of dethiobiotin (DTB) to biotin by the insertion of a sulfur atom into dethiobiotin via a radical-based mechanism. The chain is Biotin synthase from Methylobacterium nodulans (strain LMG 21967 / CNCM I-2342 / ORS 2060).